Consider the following 266-residue polypeptide: Mediator of RNA polymerase II transcription subunit 18 (266 aa).

This sequence belongs to the Mediator complex subunit 18 family. As to quaternary structure, component of the Mediator complex.

It localises to the nucleus. Functionally, component of the Mediator complex, a coactivator involved in the regulated transcription of nearly all RNA polymerase II-dependent genes. Mediator functions as a bridge to convey information from gene-specific regulatory proteins to the basal RNA polymerase II transcription machinery. Mediator is recruited to promoters by direct interactions with regulatory proteins and serves as a scaffold for the assembly of a functional preinitiation complex with RNA polymerase II and the general transcription factors. The polypeptide is Mediator of RNA polymerase II transcription subunit 18 (SRB5) (Candida glabrata (strain ATCC 2001 / BCRC 20586 / JCM 3761 / NBRC 0622 / NRRL Y-65 / CBS 138) (Yeast)).